The primary structure comprises 130 residues: ATP synthase epsilon chain, chloroplastic (130 aa).

This sequence belongs to the ATPase epsilon chain family. As to quaternary structure, F-type ATPases have 2 components, CF(1) - the catalytic core - and CF(0) - the membrane proton channel. CF(1) has five subunits: alpha(3), beta(3), gamma(1), delta(1), epsilon(1). CF(0) has three main subunits: a, b and c.

It localises to the plastid. It is found in the chloroplast thylakoid membrane. Produces ATP from ADP in the presence of a proton gradient across the membrane. The sequence is that of ATP synthase epsilon chain, chloroplastic from Tupiella akineta (Green alga).